A 228-amino-acid polypeptide reads, in one-letter code: 7-cyano-7-deazaguanine synthase (228 aa).

Position 7-17 (7-17) interacts with ATP; it reads LSGGLDSAVNL. Residues cysteine 192, cysteine 200, cysteine 203, and cysteine 206 each coordinate Zn(2+).

Belongs to the QueC family. In terms of assembly, homodimer. Requires Zn(2+) as cofactor.

The enzyme catalyses 7-carboxy-7-deazaguanine + NH4(+) + ATP = 7-cyano-7-deazaguanine + ADP + phosphate + H2O + H(+). It participates in purine metabolism; 7-cyano-7-deazaguanine biosynthesis. In terms of biological role, catalyzes the ATP-dependent conversion of 7-carboxy-7-deazaguanine (CDG) to 7-cyano-7-deazaguanine (preQ(0)). The sequence is that of 7-cyano-7-deazaguanine synthase from Desulforamulus reducens (strain ATCC BAA-1160 / DSM 100696 / MI-1) (Desulfotomaculum reducens).